The chain runs to 317 residues: L-lactate dehydrogenase (317 aa).

Residues V17, D38, K43, and 82–83 each bind NAD(+); that span reads GA. Residues Q85, R91, and 123–126 contribute to the substrate site; that span reads NPVD. NAD(+)-binding positions include 121–123 and S146; that span reads VAN. 151–154 is a substrate binding site; that stretch reads DSAR. R156 and H171 together coordinate beta-D-fructose 1,6-bisphosphate. The Proton acceptor role is filled by H178. Phosphotyrosine is present on Y224. T233 is a binding site for substrate.

The protein belongs to the LDH/MDH superfamily. LDH family. In terms of assembly, homotetramer.

It localises to the cytoplasm. The catalysed reaction is (S)-lactate + NAD(+) = pyruvate + NADH + H(+). Its pathway is fermentation; pyruvate fermentation to lactate; (S)-lactate from pyruvate: step 1/1. With respect to regulation, allosterically activated by fructose 1,6-bisphosphate (FBP). Catalyzes the conversion of lactate to pyruvate. This Moorella thermoacetica (strain ATCC 39073 / JCM 9320) protein is L-lactate dehydrogenase.